The following is a 55-amino-acid chain: Large ribosomal subunit protein bL33B (55 aa).

Belongs to the bacterial ribosomal protein bL33 family.

This is Large ribosomal subunit protein bL33B (rpmG2) from Mycobacterium tuberculosis (strain CDC 1551 / Oshkosh).